Consider the following 440-residue polypeptide: Histidinol dehydrogenase (440 aa).

NAD(+)-binding residues include tyrosine 133, glutamine 194, and asparagine 217. Residues serine 240, glutamine 262, and histidine 265 each contribute to the substrate site. Residues glutamine 262 and histidine 265 each coordinate Zn(2+). Residues glutamate 330 and histidine 331 each act as proton acceptor in the active site. 4 residues coordinate substrate: histidine 331, aspartate 364, glutamate 418, and histidine 423. Aspartate 364 is a Zn(2+) binding site. Histidine 423 is a Zn(2+) binding site.

This sequence belongs to the histidinol dehydrogenase family. Zn(2+) is required as a cofactor.

It carries out the reaction L-histidinol + 2 NAD(+) + H2O = L-histidine + 2 NADH + 3 H(+). Its pathway is amino-acid biosynthesis; L-histidine biosynthesis; L-histidine from 5-phospho-alpha-D-ribose 1-diphosphate: step 9/9. In terms of biological role, catalyzes the sequential NAD-dependent oxidations of L-histidinol to L-histidinaldehyde and then to L-histidine. This is Histidinol dehydrogenase from Nitrosospira multiformis (strain ATCC 25196 / NCIMB 11849 / C 71).